The sequence spans 178 residues: uncharacterized protein (178 aa).

4 consecutive transmembrane segments (helical) span residues 29–49 (AATG…AYLF), 76–96 (VISI…YFLL), 105–125 (PGIL…NPIF), and 139–159 (IITT…SISF).

The protein resides in the cell membrane. This is an uncharacterized protein from Bacillus subtilis (strain 168).